Here is a 700-residue protein sequence, read N- to C-terminus: MWWGGRGQSFNIAPQKEEPEMGLSGPKSNPGNRMPEPSSHQLGSCLASGCLPGEHILAWAPGRRKGPGLDLPGTLICTNFRVTFQPCGWQRKQDTPLSSENDFALINIGRLEAVSGLSRVQLLRPGSQLKFIPEELLLHGRDFRLLRVGFEAGGLAPQAFQVTMAIIQARAQSSQVQQYRGITLSKVGKVSGSRKPPIPLLETLEDWETECKKQGARGWRVSTVNERFDVATSLSGYFWVPNRILDSEVRRAFAHFHQGRGPRLSWHHPGGSDLLRCGGFYIASDPNKEDIRAVESMLQAGHSDVVLVETMDEMPSLADIQLAHLKLRALCLPDSSVAEDKWLSALEGTRWLDYVRSCLRKASDISVLVTSRVRSVVLQELGDRDFNGLLSSLVQLLLAPEARTLFGFQSLVQREWVAAGHPFLTRLGDTGASEEAPVFPLFLDCAWQLLQQFPAEFEFSEFFLLALHDSIRVPDTLTFLRNTPWERGKKSGQFNSYTQVYTPEYSQPLAGSSANLHLSVWDWDLRYSKEQISQFLNPGYDPEHCPDSRFSRQQQSLMVPGPPSSMWLFSRGTLTPLNQLCPWQDSSSLLAVSSHWLPRPARSSESLADQEWGLPSHWGACPLPPGLLLPGYLGPQIRFWKRCYLRGRPEVQMGSSALTVSALQDELSHLQELLRQWTPRISPEDQSKKRDPNTILSQIC.

The interval 1 to 39 is disordered; sequence MWWGGRGQSFNIAPQKEEPEMGLSGPKSNPGNRMPEPSS. The 444-residue stretch at 201–644 folds into the Myotubularin phosphatase domain; it reads LETLEDWETE…PQIRFWKRCY (444 aa).

It belongs to the protein-tyrosine phosphatase family. Non-receptor class myotubularin subfamily.

The chain is Myotubularin-related protein 11 (Mtmr11) from Mus musculus (Mouse).